The chain runs to 183 residues: ATP synthase subunit delta (183 aa).

The protein belongs to the ATPase delta chain family. As to quaternary structure, F-type ATPases have 2 components, F(1) - the catalytic core - and F(0) - the membrane proton channel. F(1) has five subunits: alpha(3), beta(3), gamma(1), delta(1), epsilon(1). F(0) has three main subunits: a(1), b(2) and c(10-14). The alpha and beta chains form an alternating ring which encloses part of the gamma chain. F(1) is attached to F(0) by a central stalk formed by the gamma and epsilon chains, while a peripheral stalk is formed by the delta and b chains.

The protein resides in the cell inner membrane. Functionally, f(1)F(0) ATP synthase produces ATP from ADP in the presence of a proton or sodium gradient. F-type ATPases consist of two structural domains, F(1) containing the extramembraneous catalytic core and F(0) containing the membrane proton channel, linked together by a central stalk and a peripheral stalk. During catalysis, ATP synthesis in the catalytic domain of F(1) is coupled via a rotary mechanism of the central stalk subunits to proton translocation. Its function is as follows. This protein is part of the stalk that links CF(0) to CF(1). It either transmits conformational changes from CF(0) to CF(1) or is implicated in proton conduction. This Desulfatibacillum aliphaticivorans protein is ATP synthase subunit delta.